The primary structure comprises 220 residues: Deoxyribose-phosphate aldolase 1 (220 aa).

D89 (proton donor/acceptor) is an active-site residue. The active-site Schiff-base intermediate with acetaldehyde is the K151. The active-site Proton donor/acceptor is K180.

This sequence belongs to the DeoC/FbaB aldolase family. DeoC type 1 subfamily.

The protein resides in the cytoplasm. The enzyme catalyses 2-deoxy-D-ribose 5-phosphate = D-glyceraldehyde 3-phosphate + acetaldehyde. It functions in the pathway carbohydrate degradation; 2-deoxy-D-ribose 1-phosphate degradation; D-glyceraldehyde 3-phosphate and acetaldehyde from 2-deoxy-alpha-D-ribose 1-phosphate: step 2/2. Catalyzes a reversible aldol reaction between acetaldehyde and D-glyceraldehyde 3-phosphate to generate 2-deoxy-D-ribose 5-phosphate. This Staphylococcus aureus (strain bovine RF122 / ET3-1) protein is Deoxyribose-phosphate aldolase 1.